A 228-amino-acid polypeptide reads, in one-letter code: 3-dehydroquinate dehydratase (228 aa).

Residues serine 26, 51 to 53 (EIR), and arginine 84 each bind 3-dehydroquinate. Histidine 127 (proton donor/acceptor) is an active-site residue. Lysine 150 functions as the Schiff-base intermediate with substrate in the catalytic mechanism. 3-dehydroquinate contacts are provided by arginine 190, threonine 209, and glutamine 213.

This sequence belongs to the type-I 3-dehydroquinase family. Homodimer.

It carries out the reaction 3-dehydroquinate = 3-dehydroshikimate + H2O. The protein operates within metabolic intermediate biosynthesis; chorismate biosynthesis; chorismate from D-erythrose 4-phosphate and phosphoenolpyruvate: step 3/7. Its function is as follows. Involved in the third step of the chorismate pathway, which leads to the biosynthesis of aromatic amino acids. Catalyzes the cis-dehydration of 3-dehydroquinate (DHQ) and introduces the first double bond of the aromatic ring to yield 3-dehydroshikimate. This chain is 3-dehydroquinate dehydratase, found in Thermoplasma acidophilum (strain ATCC 25905 / DSM 1728 / JCM 9062 / NBRC 15155 / AMRC-C165).